We begin with the raw amino-acid sequence, 216 residues long: Penicillin-binding protein activator LpoB (216 aa).

The first 20 residues, 1–20, serve as a signal peptide directing secretion; that stretch reads MIKNLSRYALVTAFALFLSG. Cys-21 carries the N-palmitoyl cysteine lipid modification. Residue Cys-21 is the site of S-diacylglycerol cysteine attachment. Residues 28-77 are disordered; the sequence is QPAPVDEAKPGTEQPAQPTQPVPTVPSVPTVPAQPGPIEHPDQTSQPAPR.

This sequence belongs to the LpoB family. In terms of assembly, interacts with PBP1b.

It is found in the cell outer membrane. Functionally, regulator of peptidoglycan synthesis that is essential for the function of penicillin-binding protein 1B (PBP1b). This is Penicillin-binding protein activator LpoB from Enterobacter sp. (strain 638).